The following is a 604-amino-acid chain: Elongation factor 4 (604 aa).

In terms of domain architecture, tr-type G spans 7-190 (SRLRNFCIIA…IVDRVPAPPD (184 aa)). GTP is bound by residues 19–24 (DHGKST) and 136–139 (NKID).

This sequence belongs to the TRAFAC class translation factor GTPase superfamily. Classic translation factor GTPase family. LepA subfamily.

Its subcellular location is the cell inner membrane. The enzyme catalyses GTP + H2O = GDP + phosphate + H(+). Functionally, required for accurate and efficient protein synthesis under certain stress conditions. May act as a fidelity factor of the translation reaction, by catalyzing a one-codon backward translocation of tRNAs on improperly translocated ribosomes. Back-translocation proceeds from a post-translocation (POST) complex to a pre-translocation (PRE) complex, thus giving elongation factor G a second chance to translocate the tRNAs correctly. Binds to ribosomes in a GTP-dependent manner. In Synechococcus sp. (strain RCC307), this protein is Elongation factor 4.